The primary structure comprises 134 residues: 4-carboxymuconolactone decarboxylase (134 aa).

It belongs to the carboxymuconolactone decarboxylase family.

The enzyme catalyses (R)-2-(carboxymethyl)-5-oxo-2,5-dihydro-2-furoate + H(+) = (4,5-dihydro-5-oxofuran-2-yl)-acetate + CO2. It functions in the pathway aromatic compound metabolism; beta-ketoadipate pathway; 5-oxo-4,5-dihydro-2-furylacetate from 3-carboxy-cis,cis-muconate: step 2/2. The polypeptide is 4-carboxymuconolactone decarboxylase (pcaC) (Acinetobacter baylyi (strain ATCC 33305 / BD413 / ADP1)).